The sequence spans 274 residues: N-acetylmuramic acid 6-phosphate etherase (274 aa).

The SIS domain occupies 52–215 (IIPRMEQGGR…STSIMIRLGR (164 aa)). The Proton donor role is filled by E80. The active site involves E111.

This sequence belongs to the GCKR-like family. MurNAc-6-P etherase subfamily. Homodimer.

It carries out the reaction N-acetyl-D-muramate 6-phosphate + H2O = N-acetyl-D-glucosamine 6-phosphate + (R)-lactate. It participates in amino-sugar metabolism; N-acetylmuramate degradation. Its function is as follows. Specifically catalyzes the cleavage of the D-lactyl ether substituent of MurNAc 6-phosphate, producing GlcNAc 6-phosphate and D-lactate. The protein is N-acetylmuramic acid 6-phosphate etherase of Porphyromonas gingivalis (strain ATCC BAA-308 / W83).